Here is a 101-residue protein sequence, read N- to C-terminus: Putative pterin-4-alpha-carbinolamine dehydratase (101 aa).

It belongs to the pterin-4-alpha-carbinolamine dehydratase family.

The enzyme catalyses (4aS,6R)-4a-hydroxy-L-erythro-5,6,7,8-tetrahydrobiopterin = (6R)-L-erythro-6,7-dihydrobiopterin + H2O. The polypeptide is Putative pterin-4-alpha-carbinolamine dehydratase (Rhizobium etli (strain ATCC 51251 / DSM 11541 / JCM 21823 / NBRC 15573 / CFN 42)).